Here is a 94-residue protein sequence, read N- to C-terminus: Co-chaperonin GroES (94 aa).

This sequence belongs to the GroES chaperonin family. Heptamer of 7 subunits arranged in a ring. Interacts with the chaperonin GroEL.

The protein resides in the cytoplasm. Its function is as follows. Together with the chaperonin GroEL, plays an essential role in assisting protein folding. The GroEL-GroES system forms a nano-cage that allows encapsulation of the non-native substrate proteins and provides a physical environment optimized to promote and accelerate protein folding. GroES binds to the apical surface of the GroEL ring, thereby capping the opening of the GroEL channel. This chain is Co-chaperonin GroES, found in Desulfitobacterium hafniense (strain DSM 10664 / DCB-2).